Here is a 246-residue protein sequence, read N- to C-terminus: Transcription factor MYB113 (246 aa).

HTH myb-type domains lie at 5–61 and 62–112; these read PKGL…KPSI and KRGK…SKKH. 2 consecutive DNA-binding regions (H-T-H motif) follow at residues 33 to 57 and 85 to 108; these read WHRV…LNYL and WSLI…NTHL.

As to quaternary structure, interacts with BHLH002/EGL3/MYC146, BHLH012/MYC1 and BHLH042/TT8.

The protein resides in the nucleus. Its function is as follows. Transcription activator, when associated with BHLH002/EGL3/MYC146, BHLH012/MYC1, or BHLH042/TT8. In Arabidopsis thaliana (Mouse-ear cress), this protein is Transcription factor MYB113 (MYB113).